The primary structure comprises 146 residues: Hemoglobin subunit beta-2 (146 aa).

The Globin domain occupies 2 to 146 (EWTDFERATI…VVSALGRQYH (145 aa)). The heme b site is built by H63 and H92.

Belongs to the globin family. As to quaternary structure, hb3 is a heterotetramer of two alpha-2 chains and two beta-2 chains. Red blood cells.

Its function is as follows. Involved in oxygen transport from gills to the various peripheral tissues. The polypeptide is Hemoglobin subunit beta-2 (hbb2) (Anarhichas minor (Arctic spotted wolffish)).